Consider the following 1362-residue polypeptide: ATP-dependent RNA helicase dhx29 (1362 aa).

Over residues Met1–His10 the composition is skewed to basic residues. Residues Met1–Ser76 are disordered. A compositionally biased stretch (low complexity) spans Gly18–Arg27. A compositionally biased stretch (basic and acidic residues) spans Ala28–Lys41. Low complexity predominate over residues Ser66 to Ser76. A coiled-coil region spans residues Glu89–Asn109. Disordered regions lie at residues Gln182–Asn215 and Glu229–Glu257. The span at Gly231 to Lys242 shows a compositional bias: acidic residues. The span at Glu243–Glu257 shows a compositional bias: basic and acidic residues. Positions Gln285–His305 form a coiled coil. The interval Val317–Leu336 is disordered. A Helicase ATP-binding domain is found at Leu576–Ser749. Gly589–Ser596 is a binding site for ATP. The short motif at Asp696–His699 is the DEAH box element. One can recognise a Helicase C-terminal domain in the interval Asp852–Asp1021.

This sequence belongs to the DEAD box helicase family. DEAH subfamily. In terms of assembly, part of the 43S pre-initiation complex (PIC).

It localises to the cytoplasm. It carries out the reaction ATP + H2O = ADP + phosphate + H(+). Its function is as follows. ATP-binding RNA helicase involved in translation initiation. Part of the 43S pre-initiation complex that is required for efficient initiation on mRNAs of higher eukaryotes with structured 5'-UTRs by promoting efficient NTPase-dependent 48S complex formation. Specifically binds to the 40S ribosome near the mRNA entrance. Does not possess a processive helicase activity. This is ATP-dependent RNA helicase dhx29 from Xenopus laevis (African clawed frog).